Here is a 237-residue protein sequence, read N- to C-terminus: 2-C-methyl-D-erythritol 4-phosphate cytidylyltransferase (237 aa).

This sequence belongs to the IspD/TarI cytidylyltransferase family. IspD subfamily.

It carries out the reaction 2-C-methyl-D-erythritol 4-phosphate + CTP + H(+) = 4-CDP-2-C-methyl-D-erythritol + diphosphate. It participates in isoprenoid biosynthesis; isopentenyl diphosphate biosynthesis via DXP pathway; isopentenyl diphosphate from 1-deoxy-D-xylulose 5-phosphate: step 2/6. Catalyzes the formation of 4-diphosphocytidyl-2-C-methyl-D-erythritol from CTP and 2-C-methyl-D-erythritol 4-phosphate (MEP). The polypeptide is 2-C-methyl-D-erythritol 4-phosphate cytidylyltransferase (Paraburkholderia xenovorans (strain LB400)).